The following is an 85-amino-acid chain: ATPAELATKAGCAVCHQPTAKGLGPSYQEIAKKYKGQAGAPALMAERVRKGSVGIFGKLPMTPTPPARISDADLKLVIDWILKTP.

The heme c site is built by C12, C15, H16, and M61.

Belongs to the cytochrome c family. Post-translationally, binds 1 heme c group covalently per subunit.

Its function is as follows. Cytochrome c2 is found mainly in purple, non-sulfur, photosynthetic bacteria where it functions as the electron donor to the oxidized bacteriochlorophyll in the photophosphorylation pathway. However, it may also have a role in the respiratory chain and is found in some non-photosynthetic bacteria. This Rubrivivax gelatinosus (Rhodocyclus gelatinosus) protein is Cytochrome c2.